We begin with the raw amino-acid sequence, 242 residues long: Small ribosomal subunit protein uS3 (242 aa).

The KH type-2 domain occupies 39–110 (IRKFIHKKYG…QVRINVVEVE (72 aa)). A disordered region spans residues 216 to 242 (QPMPVGAAPRRRASRRPQQFEDRSNEG). A compositionally biased stretch (basic and acidic residues) spans 233 to 242 (QQFEDRSNEG).

Belongs to the universal ribosomal protein uS3 family. Part of the 30S ribosomal subunit. Forms a tight complex with proteins S10 and S14.

In terms of biological role, binds the lower part of the 30S subunit head. Binds mRNA in the 70S ribosome, positioning it for translation. In Synechococcus sp. (strain CC9605), this protein is Small ribosomal subunit protein uS3.